Reading from the N-terminus, the 29-residue chain is Cyclotide psyleio D (29 aa).

The cyclopeptide (Gly-Asp) cross-link spans 1-29 (GLPVCGESCFGGTCNTPGCSCTWPVCTRD). Disulfide bonds link Cys5–Cys19, Cys9–Cys21, and Cys14–Cys26.

This is a cyclic peptide.

Probably participates in a plant defense mechanism. This chain is Cyclotide psyleio D, found in Psychotria brachyceras.